A 270-amino-acid polypeptide reads, in one-letter code: 4-hydroxy-tetrahydrodipicolinate reductase (270 aa).

NAD(+)-binding positions include 11-16 (GASGRM) and Glu37. Arg38 lines the NADP(+) pocket. NAD(+) is bound by residues 101–103 (GTT) and 125–128 (APNM). His158 (proton donor/acceptor) is an active-site residue. His159 provides a ligand contact to (S)-2,3,4,5-tetrahydrodipicolinate. Lys162 serves as the catalytic Proton donor. 168 to 169 (GT) contributes to the (S)-2,3,4,5-tetrahydrodipicolinate binding site.

It belongs to the DapB family.

Its subcellular location is the cytoplasm. The enzyme catalyses (S)-2,3,4,5-tetrahydrodipicolinate + NAD(+) + H2O = (2S,4S)-4-hydroxy-2,3,4,5-tetrahydrodipicolinate + NADH + H(+). It catalyses the reaction (S)-2,3,4,5-tetrahydrodipicolinate + NADP(+) + H2O = (2S,4S)-4-hydroxy-2,3,4,5-tetrahydrodipicolinate + NADPH + H(+). Its pathway is amino-acid biosynthesis; L-lysine biosynthesis via DAP pathway; (S)-tetrahydrodipicolinate from L-aspartate: step 4/4. Catalyzes the conversion of 4-hydroxy-tetrahydrodipicolinate (HTPA) to tetrahydrodipicolinate. This chain is 4-hydroxy-tetrahydrodipicolinate reductase, found in Shewanella frigidimarina (strain NCIMB 400).